A 130-amino-acid chain; its full sequence is uncharacterized protein (130 aa).

The protein belongs to the HesB/IscA family.

This is an uncharacterized protein from Buchnera aphidicola subsp. Acyrthosiphon pisum (strain APS) (Acyrthosiphon pisum symbiotic bacterium).